Consider the following 118-residue polypeptide: Na(+)/H(+) antiporter subunit G1 (118 aa).

Helical transmembrane passes span 9 to 29 (IALILVIIGSLISALAAIGIL), 41 to 61 (AGKAATLGAMLLISGVFLFFI), and 70 to 90 (QLIVGILFILITGPLASHLII).

This sequence belongs to the CPA3 antiporters (TC 2.A.63) subunit G family. In terms of assembly, may form a heterooligomeric complex that consists of seven subunits: mnhA1, mnhB1, mnhC1, mnhD1, mnhE1, mnhF1 and mnhG1.

Its subcellular location is the cell membrane. Its function is as follows. Mnh complex is a Na(+)/H(+) antiporter involved in Na(+) excretion. This Staphylococcus saprophyticus subsp. saprophyticus (strain ATCC 15305 / DSM 20229 / NCIMB 8711 / NCTC 7292 / S-41) protein is Na(+)/H(+) antiporter subunit G1 (mnhG1).